Reading from the N-terminus, the 284-residue chain is NAD kinase (284 aa).

The Proton acceptor role is filled by aspartate 70. NAD(+)-binding positions include 70–71, 139–140, lysine 167, aspartate 169, leucine 177, 180–185, and glutamine 236; these read DG, NE, and TAYNLS.

This sequence belongs to the NAD kinase family. Requires a divalent metal cation as cofactor.

The protein resides in the cytoplasm. It carries out the reaction NAD(+) + ATP = ADP + NADP(+) + H(+). In terms of biological role, involved in the regulation of the intracellular balance of NAD and NADP, and is a key enzyme in the biosynthesis of NADP. Catalyzes specifically the phosphorylation on 2'-hydroxyl of the adenosine moiety of NAD to yield NADP. The polypeptide is NAD kinase (Helicobacter pylori (strain G27)).